The chain runs to 273 residues: Protein FAM216A (273 aa).

Positions 1 to 47 are disordered; the sequence is MLGQLLPHTARGLGAAEMPGQGPGSDWTERSSSAEPPAVAGTEGGGG.

This sequence belongs to the FAM216 family.

The chain is Protein FAM216A (FAM216A) from Homo sapiens (Human).